The primary structure comprises 272 residues: HMP-PP phosphatase (272 aa).

Catalysis depends on aspartate 8, which acts as the Nucleophile. Mg(2+) contacts are provided by aspartate 8, aspartate 10, and aspartate 212.

This sequence belongs to the HAD-like hydrolase superfamily. Cof family. Mg(2+) serves as cofactor.

It carries out the reaction 4-amino-2-methyl-5-(diphosphooxymethyl)pyrimidine + H2O = 4-amino-2-methyl-5-(phosphooxymethyl)pyrimidine + phosphate + H(+). In terms of biological role, catalyzes the hydrolysis of 4-amino-2-methyl-5-hydroxymethylpyrimidine pyrophosphate (HMP-PP) to 4-amino-2-methyl-5-hydroxymethylpyrimidine phosphate (HMP-P). This chain is HMP-PP phosphatase, found in Salmonella arizonae (strain ATCC BAA-731 / CDC346-86 / RSK2980).